The sequence spans 451 residues: UDP-N-acetylmuramoylalanine--D-glutamate ligase (451 aa).

Position 119–125 (119–125 (GSNGKTT)) interacts with ATP.

This sequence belongs to the MurCDEF family.

It localises to the cytoplasm. The enzyme catalyses UDP-N-acetyl-alpha-D-muramoyl-L-alanine + D-glutamate + ATP = UDP-N-acetyl-alpha-D-muramoyl-L-alanyl-D-glutamate + ADP + phosphate + H(+). Its pathway is cell wall biogenesis; peptidoglycan biosynthesis. Its function is as follows. Cell wall formation. Catalyzes the addition of glutamate to the nucleotide precursor UDP-N-acetylmuramoyl-L-alanine (UMA). The polypeptide is UDP-N-acetylmuramoylalanine--D-glutamate ligase (Streptococcus agalactiae serotype Ia (strain ATCC 27591 / A909 / CDC SS700)).